A 361-amino-acid chain; its full sequence is Peptide chain release factor 1 (361 aa).

Glutamine 237 carries the post-translational modification N5-methylglutamine. The segment at 285–306 (QAEQSAQQTEQRRQLVGSGDRS) is disordered.

The protein belongs to the prokaryotic/mitochondrial release factor family. Post-translationally, methylated by PrmC. Methylation increases the termination efficiency of RF1.

The protein resides in the cytoplasm. Its function is as follows. Peptide chain release factor 1 directs the termination of translation in response to the peptide chain termination codons UAG and UAA. The polypeptide is Peptide chain release factor 1 (Alkalilimnicola ehrlichii (strain ATCC BAA-1101 / DSM 17681 / MLHE-1)).